The chain runs to 263 residues: Protein maestro (263 aa).

The segment at 1–21 (MDQTPRRMLGQPLSSPATQPK) is disordered. The stretch at 128–163 (SFFIDITLQTRTLLDDENDSLRYSAFVLFGQLADLA) is one HEAT repeat.

The protein resides in the nucleus. Its subcellular location is the nucleolus. The protein is Protein maestro (MRO) of Bos taurus (Bovine).